A 355-amino-acid polypeptide reads, in one-letter code: Blue-sensitive opsin (355 aa).

The Extracellular segment spans residues 1-41; that stretch reads MKSRPQEFQEDFYIPIPLDTNNITALSPFLVPQDHLGGSGI. Asn22 carries N-linked (GlcNAc...) asparagine glycosylation. Residues 42 to 66 form a helical membrane-spanning segment; it reads FMIMTVFMLFLFIGGTSINVLTIVC. Residues 67–78 lie on the Cytoplasmic side of the membrane; sequence TVQYKKLRSHLN. A helical membrane pass occupies residues 79–104; sequence YILVNLAISNLLVSTVGSFTAFVSFL. The Extracellular segment spans residues 105–118; the sequence is NRYFIFGPTACKIE. Cys115 and Cys192 are joined by a disulfide. A helical transmembrane segment spans residues 119–138; sequence GFVATLGGMVSLWSLSVVAF. The Cytoplasmic portion of the chain corresponds to 139-157; that stretch reads ERWLVICKPVGNFSFKGTH. Residues 158–181 form a helical membrane-spanning segment; it reads AIIGCALTWFFALLASTPPLFGWS. Residues 182–207 are Extracellular-facing; it reads RYIPEGLQCSCGPDWYTTENKYNNES. Asn205 carries an N-linked (GlcNAc...) asparagine glycan. The chain crosses the membrane as a helical span at residues 208 to 235; the sequence is YVMFLFCFCFGFPFTVILFCYGQLLFTL. The Cytoplasmic segment spans residues 236–257; it reads KSAAKAQADSASTQKAEREVTK. The chain crosses the membrane as a helical span at residues 258–281; the sequence is MVVVMVMGFLVCWLPYASFALWVV. Over 282–289 the chain is Extracellular; sequence FNRGQSFD. A helical transmembrane segment spans residues 290–314; that stretch reads LRLGTIPSCFSKASTVYNPVIYVFM. Lys301 is modified (N6-(retinylidene)lysine). At 315–355 the chain is on the cytoplasmic side; that stretch reads NKQFRSCMMKLIFCGKSPFGDDEEASSSSQVTQVSSVGPEK. The interval 334–355 is disordered; it reads GDDEEASSSSQVTQVSSVGPEK. A compositionally biased stretch (low complexity) spans 340–355; sequence SSSSQVTQVSSVGPEK.

Belongs to the G-protein coupled receptor 1 family. Opsin subfamily. In terms of processing, phosphorylated on some or all of the serine and threonine residues present in the C-terminal region. In terms of tissue distribution, the color pigments are found in the cone photoreceptor cells.

The protein resides in the membrane. Its function is as follows. Visual pigments are the light-absorbing molecules that mediate vision. They consist of an apoprotein, opsin, covalently linked to cis-retinal. This Psalidodon fasciatus (Banded astyanax) protein is Blue-sensitive opsin (B23).